Here is a 177-residue protein sequence, read N- to C-terminus: Large ribosomal subunit protein uL6 (177 aa).

This sequence belongs to the universal ribosomal protein uL6 family. As to quaternary structure, part of the 50S ribosomal subunit.

Its function is as follows. This protein binds to the 23S rRNA, and is important in its secondary structure. It is located near the subunit interface in the base of the L7/L12 stalk, and near the tRNA binding site of the peptidyltransferase center. This chain is Large ribosomal subunit protein uL6, found in Rhodopseudomonas palustris (strain BisB5).